Reading from the N-terminus, the 99-residue chain is AVTKADVEQYDLANGKTVYDANCASCHAAGIMGAPKTGTARKWNSRLPQGLATMIEKSVAGYEGEYRGSKTFMPAKGGNPDLTDKQVGDAVAYMVNEVL.

Heme c contacts are provided by Cys-23, Cys-26, His-27, and Met-73.

In terms of processing, binds 1 heme c group covalently per subunit.

The polypeptide is Cytochrome c-555 (Prosthecochloris aestuarii).